The primary structure comprises 208 residues: MAQETNHSQVPMLCSTGCGFYGNPRTNGMCSVCYKEHLQRQNSSNGRISPPATSVSSLSESLPVQCTDGSVPEAQSTLDSTSSSMQPSPVSNQSLLSESVASSQLDSTSVDKAVPETEDLQASVSDTAQQPSEEQSKSLEKPKQKKNRCFMCRKKVGLTGFECRCGNVYCGVHRYSDVHNCSYNYKADAAEKIRKENPVVVGEKIQKI.

Residues 8 to 42 (SQVPMLCSTGCGFYGNPRTNGMCSVCYKEHLQRQN) form an A20-type zinc finger. Zn(2+) contacts are provided by Cys-14, Cys-18, Cys-30, and Cys-33. The segment covering 41–68 (QNSSNGRISPPATSVSSLSESLPVQCTD) has biased composition (polar residues). The disordered stretch occupies residues 41 to 140 (QNSSNGRISP…PSEEQSKSLE (100 aa)). Ser-49 is modified (phosphoserine). The span at 75 to 94 (QSTLDSTSSSMQPSPVSNQS) shows a compositional bias: low complexity. 2 stretches are compositionally biased toward polar residues: residues 95–110 (LLSE…STSV) and 120–133 (LQAS…QPSE). The AN1-type zinc finger occupies 143–189 (KQKKNRCFMCRKKVGLTGFECRCGNVYCGVHRYSDVHNCSYNYKADA). Cys-149, Cys-152, Cys-163, Cys-165, Cys-170, His-173, His-179, and Cys-181 together coordinate Zn(2+). Lys-204 bears the N6-acetyllysine mark.

Interacts with PKN1. Interacts with TRAF2. Interacts with mono- and polyubiquitin. Interacts with PEX6. Interacts with PEX5 (Cys-linked ubiquitinated).

The protein resides in the cytoplasm. Functionally, involved in regulation of TNF-alpha induced NF-kappa-B activation and apoptosis. Involved in modulation of 'Lys-48'-linked polyubiquitination status of TRAF2 and decreases association of TRAF2 with RIPK1. Required for PTS1 target sequence-dependent protein import into peroxisomes and PEX5 stability; may cooperate with PEX6. In vitro involved in PEX5 export from the cytosol to peroxisomes. This Pongo abelii (Sumatran orangutan) protein is AN1-type zinc finger protein 6 (ZFAND6).